A 172-amino-acid polypeptide reads, in one-letter code: 6,7-dimethyl-8-ribityllumazine synthase (172 aa).

Residues F22 and 56–58 contribute to the 5-amino-6-(D-ribitylamino)uracil site; that span reads AFE. A (2S)-2-hydroxy-3-oxobutyl phosphate-binding site is contributed by 78 to 79; that stretch reads LG. 80-82 is a binding site for 5-amino-6-(D-ribitylamino)uracil; that stretch reads AII. The Proton donor role is filled by H88. F113 lines the 5-amino-6-(D-ribitylamino)uracil pocket. R127 provides a ligand contact to (2S)-2-hydroxy-3-oxobutyl phosphate.

Belongs to the DMRL synthase family.

It catalyses the reaction (2S)-2-hydroxy-3-oxobutyl phosphate + 5-amino-6-(D-ribitylamino)uracil = 6,7-dimethyl-8-(1-D-ribityl)lumazine + phosphate + 2 H2O + H(+). It participates in cofactor biosynthesis; riboflavin biosynthesis; riboflavin from 2-hydroxy-3-oxobutyl phosphate and 5-amino-6-(D-ribitylamino)uracil: step 1/2. In terms of biological role, catalyzes the formation of 6,7-dimethyl-8-ribityllumazine by condensation of 5-amino-6-(D-ribitylamino)uracil with 3,4-dihydroxy-2-butanone 4-phosphate. This is the penultimate step in the biosynthesis of riboflavin. The protein is 6,7-dimethyl-8-ribityllumazine synthase of Protochlamydia amoebophila (strain UWE25).